Here is a 473-residue protein sequence, read N- to C-terminus: Cysteine--tRNA ligase (473 aa).

Cysteine 28 contacts Zn(2+). The short motif at 30–40 (MTVYDFCHIGH) is the 'HIGH' region element. The Zn(2+) site is built by cysteine 212, histidine 237, and glutamate 241. A 'KMSKS' region motif is present at residues 277-281 (KMSKS). Lysine 280 contacts ATP.

It belongs to the class-I aminoacyl-tRNA synthetase family. Monomer. Requires Zn(2+) as cofactor.

It is found in the cytoplasm. The enzyme catalyses tRNA(Cys) + L-cysteine + ATP = L-cysteinyl-tRNA(Cys) + AMP + diphosphate. The chain is Cysteine--tRNA ligase from Polynucleobacter asymbioticus (strain DSM 18221 / CIP 109841 / QLW-P1DMWA-1) (Polynucleobacter necessarius subsp. asymbioticus).